The primary structure comprises 487 residues: Betaine aldehyde dehydrogenase 1 (487 aa).

The K(+) site is built by Ser-26, Ile-27, and Asp-93. Residue 150–152 (GAW) coordinates NAD(+). Lys-162 functions as the Charge relay system in the catalytic mechanism. NAD(+)-binding positions include 176–179 (KPSE) and 229–232 (SVPT). Leu-244 contributes to the K(+) binding site. Glu-250 acts as the Proton acceptor in catalysis. 3 residues coordinate NAD(+): Gly-252, Cys-284, and Glu-384. Residue Cys-284 is the Nucleophile of the active site. Cysteine sulfenic acid (-SOH) is present on Cys-284. K(+) is bound by residues Lys-454 and Gly-457. Glu-461 serves as the catalytic Charge relay system.

Belongs to the aldehyde dehydrogenase family. Dimer of dimers. The cofactor is K(+).

The enzyme catalyses betaine aldehyde + NAD(+) + H2O = glycine betaine + NADH + 2 H(+). Its pathway is amine and polyamine biosynthesis; betaine biosynthesis via choline pathway; betaine from betaine aldehyde: step 1/1. Functionally, involved in the biosynthesis of the osmoprotectant glycine betaine. Catalyzes the irreversible oxidation of betaine aldehyde to the corresponding acid. This is Betaine aldehyde dehydrogenase 1 from Rhizobium meliloti (strain 1021) (Ensifer meliloti).